Here is a 177-residue protein sequence, read N- to C-terminus: MAKRKEEVFNWEDEEQEEIIWVSKSEIKRDAEALKKLGEKLVNLTKTNLDKIPLDTGLRDAVELAQRLQKEALRRQIQYIGKLLRAIDPEPIQEALNKIENKHQQQQAKLHKLELLRDELVQKGNSAFTELLIQYPHADRQHLHNLIRSAQKEREQNKPPKSYREIFQYLKDLILED.

It belongs to the DarP family.

The protein resides in the cytoplasm. Functionally, member of a network of 50S ribosomal subunit biogenesis factors which assembles along the 30S-50S interface, preventing incorrect 23S rRNA structures from forming. Promotes peptidyl transferase center (PTC) maturation. This chain is Dual-action ribosomal maturation protein DarP, found in Histophilus somni (strain 129Pt) (Haemophilus somnus).